Reading from the N-terminus, the 86-residue chain is Secreted transmembrane peptide 6 (86 aa).

Residues 1–31 (MGMKSPNIAAFMLPLLLILFTLSSQLKVVES) form the signal peptide. The SCOOP motif signature appears at 45-58 (IVYTPPSRSCGTSP). Positions 51–53 (SRS) match the SxS motif essential for MIK2 binding motif.

This sequence belongs to the serine rich endogenous peptide (SCOOP) phytocytokine family. As to quaternary structure, interacts with MIK2 (via extracellular leucine-rich repeat domain); this interaction triggers the formation of complex between MIK2 and the BAK1/SERK3 and SERK4 coreceptors, and subsequent BAK1 activation by phosphorylation. As to expression, mostly expressed in leaves, and, to a lower extent, in roots, stems, siliques, seeds and flowers.

The protein resides in the cell membrane. It is found in the secreted. Its subcellular location is the extracellular space. The protein localises to the apoplast. Its function is as follows. Brassicaceae-specific phytocytokine (plant endogenous peptide released into the apoplast) perceived by MIK2 in a BAK1/SERK3 and SERK4 coreceptors-dependent manner, that modulates various physiological and antimicrobial processes including growth prevention and reactive oxygen species (ROS) response regulation. Prevents general growth and development. This Arabidopsis thaliana (Mouse-ear cress) protein is Secreted transmembrane peptide 6.